The primary structure comprises 646 residues: MRTPGAGTASVASLGLLWLLGLPWTWSAAAAFGVYVGSGGWRFLRIVCKTARRDLFGLSVLIRVRLELRRHRRAGDTIPRIFQAVAQRQPERLALVDASSGICWTFAQLDTYSNAVANLFLQLGFAPGDVVAVFLEGRPEFVGLWLGLAKAGVVAALLNVNLRREPLAFCLGTSAAKALIYGGEMAAAVAEVSEQLGKSLLKFCSGDLGPESVLPDTQLLDPMLAEAPTTPLAQAPGKGMDDRLFYIYTSGTTGLPKAAIVVHSRYYRIAAFGHHSYSMRANDVLYDCLPLYHSAGNIMGVGQCIIYGLTVVLRKKFSASRFWDDCVKYNCTVVQYIGEICRYLLRQPVRDVERRHRVRLAVGNGLRPAIWEEFTQGFGVRQIGEFYGATECNCSIANMDGKVGSCGFNSRILTHVYPIRLVKVNEDTMEPLRDSQGLCIPCQPGEPGLLVGQINQQDPLRRFDGYVSDSATNKKIAHSVFRKGDSAYLSGDVLVMDELGYMYFRDRSGDTFRWRGENVSTTEVEAVLSRLLGQTDVAVYGVAVPGVEGKSGMAAIADPHNQLDPNSMYQELQKVLASYAQPIFLRLLPQVDTTGTFKIQKTRLQREGFDPRQTSDRLFFLDLKQGRYLPLDERVHARICAGDFSL.

Over 1–13 the chain is Extracellular; it reads MRTPGAGTASVAS. A helical membrane pass occupies residues 14 to 34; the sequence is LGLLWLLGLPWTWSAAAAFGV. Over 35–646 the chain is Cytoplasmic; that stretch reads YVGSGGWRFL…ARICAGDFSL (612 aa). The interval 191–475 is sufficient for oligomerization; sequence EVSEQLGKSL…YVSDSATNKK (285 aa). 246–257 is a binding site for AMP; it reads YIYTSGTTGLPK.

Belongs to the ATP-dependent AMP-binding enzyme family. Self-associates. May function as a homodimer. Interacts with EPRS1; mediates the translocation of SLC27A1 from the cytoplasm to the plasma membrane thereby increasing the uptake of long-chain fatty acids. Interacts with DGAT2 and this interaction is enhanced in the presence of ZFYVE1. In terms of tissue distribution, expressed in muscle.

It localises to the cell membrane. Its subcellular location is the endomembrane system. The protein localises to the cytoplasm. It catalyses the reaction a fatty acid(in) = a fatty acid(out). The catalysed reaction is (9Z)-octadecenoate(out) = (9Z)-octadecenoate(in). It carries out the reaction hexadecanoate(out) = hexadecanoate(in). The enzyme catalyses (5Z,8Z,11Z,14Z)-eicosatetraenoate(out) = (5Z,8Z,11Z,14Z)-eicosatetraenoate(in). It catalyses the reaction (9Z,12Z)-octadecadienoate(out) = (9Z,12Z)-octadecadienoate(in). The catalysed reaction is a long-chain fatty acid + ATP + CoA = a long-chain fatty acyl-CoA + AMP + diphosphate. It carries out the reaction (5Z,8Z,11Z,14Z)-eicosatetraenoate + ATP + CoA = (5Z,8Z,11Z,14Z)-eicosatetraenoyl-CoA + AMP + diphosphate. The enzyme catalyses a very long-chain fatty acid + ATP + CoA = a very long-chain fatty acyl-CoA + AMP + diphosphate. It catalyses the reaction tetracosanoate + ATP + CoA = tetracosanoyl-CoA + AMP + diphosphate. Inhibited by Triacsin C. Its function is as follows. Mediates the import of long-chain fatty acids (LCFA) into the cell by facilitating their transport at the plasma membrane. Also functions as an acyl-CoA ligase catalyzing the ATP-dependent formation of fatty acyl-CoA using LCFA and very-long-chain fatty acids (VLCFA) as substrates, which prevents fatty acid efflux from cells and might drive more fatty acid uptake. May act directly as a bona fide transporter, or alternatively, in a cytoplasmic or membrane-associated multimeric protein complex to trap and draw fatty acids towards accumulation. Plays a pivotal role in regulating available LCFA substrates from exogenous sources in tissues undergoing high levels of beta-oxidation or triglyceride synthesis. May be involved in regulation of cholesterol metabolism. Probably involved in fatty acid transport across the blood barrier. In Rattus norvegicus (Rat), this protein is Long-chain fatty acid transport protein 1.